Consider the following 318-residue polypeptide: Acetyl-coenzyme A carboxylase carboxyl transferase subunit alpha (318 aa).

One can recognise a CoA carboxyltransferase C-terminal domain in the interval 32-293 (NINEEIQRLE…REALREEWAR (262 aa)).

Belongs to the AccA family. Acetyl-CoA carboxylase is a heterohexamer composed of biotin carboxyl carrier protein (AccB), biotin carboxylase (AccC) and two subunits each of ACCase subunit alpha (AccA) and ACCase subunit beta (AccD).

Its subcellular location is the cytoplasm. It carries out the reaction N(6)-carboxybiotinyl-L-lysyl-[protein] + acetyl-CoA = N(6)-biotinyl-L-lysyl-[protein] + malonyl-CoA. The protein operates within lipid metabolism; malonyl-CoA biosynthesis; malonyl-CoA from acetyl-CoA: step 1/1. Component of the acetyl coenzyme A carboxylase (ACC) complex. First, biotin carboxylase catalyzes the carboxylation of biotin on its carrier protein (BCCP) and then the CO(2) group is transferred by the carboxyltransferase to acetyl-CoA to form malonyl-CoA. The polypeptide is Acetyl-coenzyme A carboxylase carboxyl transferase subunit alpha (Halorhodospira halophila (strain DSM 244 / SL1) (Ectothiorhodospira halophila (strain DSM 244 / SL1))).